We begin with the raw amino-acid sequence, 476 residues long: Aspartyl/glutamyl-tRNA(Asn/Gln) amidotransferase subunit B (476 aa).

The protein belongs to the GatB/GatE family. GatB subfamily. In terms of assembly, heterotrimer of A, B and C subunits.

The enzyme catalyses L-glutamyl-tRNA(Gln) + L-glutamine + ATP + H2O = L-glutaminyl-tRNA(Gln) + L-glutamate + ADP + phosphate + H(+). It carries out the reaction L-aspartyl-tRNA(Asn) + L-glutamine + ATP + H2O = L-asparaginyl-tRNA(Asn) + L-glutamate + ADP + phosphate + 2 H(+). Allows the formation of correctly charged Asn-tRNA(Asn) or Gln-tRNA(Gln) through the transamidation of misacylated Asp-tRNA(Asn) or Glu-tRNA(Gln) in organisms which lack either or both of asparaginyl-tRNA or glutaminyl-tRNA synthetases. The reaction takes place in the presence of glutamine and ATP through an activated phospho-Asp-tRNA(Asn) or phospho-Glu-tRNA(Gln). The sequence is that of Aspartyl/glutamyl-tRNA(Asn/Gln) amidotransferase subunit B from Clostridium kluyveri (strain ATCC 8527 / DSM 555 / NBRC 12016 / NCIMB 10680 / K1).